Reading from the N-terminus, the 104-residue chain is Large ribosomal subunit protein bL21c (104 aa).

This sequence belongs to the bacterial ribosomal protein bL21 family. Part of the 50S ribosomal subunit.

It is found in the plastid. Its subcellular location is the chloroplast. In terms of biological role, this protein binds to 23S rRNA. This chain is Large ribosomal subunit protein bL21c, found in Pyropia yezoensis (Susabi-nori).